Here is a 199-residue protein sequence, read N- to C-terminus: Dephospho-CoA kinase (199 aa).

The 196-residue stretch at V4–S199 folds into the DPCK domain. A12–T17 is an ATP binding site.

It belongs to the CoaE family.

It is found in the cytoplasm. The catalysed reaction is 3'-dephospho-CoA + ATP = ADP + CoA + H(+). It functions in the pathway cofactor biosynthesis; coenzyme A biosynthesis; CoA from (R)-pantothenate: step 5/5. Functionally, catalyzes the phosphorylation of the 3'-hydroxyl group of dephosphocoenzyme A to form coenzyme A. In Oceanobacillus iheyensis (strain DSM 14371 / CIP 107618 / JCM 11309 / KCTC 3954 / HTE831), this protein is Dephospho-CoA kinase.